The following is a 368-amino-acid chain: Isopentenyl-diphosphate delta-isomerase (368 aa).

7-8 is a substrate binding site; that stretch reads RK. FMN contacts are provided by residues Thr65, 66-68, Ser96, and Asn125; that span reads GMT. Position 96–98 (96–98) interacts with substrate; it reads SQR. Position 160 (Gln160) interacts with substrate. Glu161 lines the Mg(2+) pocket. FMN contacts are provided by residues Lys193, Ser218, Thr223, 275 to 277, and 296 to 297; these read GIR and AL.

It belongs to the IPP isomerase type 2 family. In terms of assembly, homooctamer. Dimer of tetramers. The cofactor is FMN. Requires NADPH as cofactor. Mg(2+) is required as a cofactor.

It is found in the cytoplasm. The catalysed reaction is isopentenyl diphosphate = dimethylallyl diphosphate. Its function is as follows. Involved in the biosynthesis of isoprenoids. Catalyzes the 1,3-allylic rearrangement of the homoallylic substrate isopentenyl (IPP) to its allylic isomer, dimethylallyl diphosphate (DMAPP). The protein is Isopentenyl-diphosphate delta-isomerase of Saccharolobus shibatae (strain ATCC 51178 / DSM 5389 / JCM 8931 / NBRC 15437 / B12) (Sulfolobus shibatae).